The following is a 217-amino-acid chain: tRNA (guanine-N(7)-)-methyltransferase (217 aa).

E44, E69, D96, and D118 together coordinate S-adenosyl-L-methionine. The active site involves D118. Residues K122, D154, and T191–E194 each bind substrate.

Belongs to the class I-like SAM-binding methyltransferase superfamily. TrmB family.

The enzyme catalyses guanosine(46) in tRNA + S-adenosyl-L-methionine = N(7)-methylguanosine(46) in tRNA + S-adenosyl-L-homocysteine. Its pathway is tRNA modification; N(7)-methylguanine-tRNA biosynthesis. Its function is as follows. Catalyzes the formation of N(7)-methylguanine at position 46 (m7G46) in tRNA. This chain is tRNA (guanine-N(7)-)-methyltransferase, found in Bacillus cytotoxicus (strain DSM 22905 / CIP 110041 / 391-98 / NVH 391-98).